A 408-amino-acid polypeptide reads, in one-letter code: tRNA-specific 2-thiouridylase MnmA (408 aa).

Residues 38 to 45 (GMSGGVDS) and Met-64 each bind ATP. The segment at 124-126 (NPD) is interaction with target base in tRNA. Cys-129 functions as the Nucleophile in the catalytic mechanism. Cys-129 and Cys-231 are oxidised to a cystine. Gly-153 contacts ATP. The tract at residues 181–183 (KDQ) is interaction with tRNA. The active-site Cysteine persulfide intermediate is the Cys-231. The interval 348–349 (RY) is interaction with tRNA.

The protein belongs to the MnmA/TRMU family.

It localises to the cytoplasm. The enzyme catalyses S-sulfanyl-L-cysteinyl-[protein] + uridine(34) in tRNA + AH2 + ATP = 2-thiouridine(34) in tRNA + L-cysteinyl-[protein] + A + AMP + diphosphate + H(+). Its function is as follows. Catalyzes the 2-thiolation of uridine at the wobble position (U34) of tRNA, leading to the formation of s(2)U34. The sequence is that of tRNA-specific 2-thiouridylase MnmA from Psychrobacter arcticus (strain DSM 17307 / VKM B-2377 / 273-4).